Consider the following 256-residue polypeptide: MSILEINNLHVSIEGKEILKGVNLTLKTGEVAAIMGPNGTGKSTLSAAIMGNPNYEVTQGQILLDGVNILDLEVDERARLGLFLAMQYPSEIPGITNAEFMRAAMNADKADEDKISVRDFITKLDEKMALLGMKEEMAERYLNEGFSGGEKKRNEILQLLMLEPKFALLDEIDSGLDIDALKVVSKGVNEMRGKDFGAMIITHYQRLLNYITPDLVHVMMDGRIVLSGDAALATRLEKEGYAGIAQDLGIEYKEES.

Residues Leu4–Gln246 enclose the ABC transporter domain. Gly36 to Ser43 serves as a coordination point for ATP.

It belongs to the ABC transporter superfamily. Ycf16 family.

It localises to the cell membrane. This chain is Probable ABC transporter ATP-binding protein spyM18_0273, found in Streptococcus pyogenes serotype M18 (strain MGAS8232).